Reading from the N-terminus, the 176-residue chain is ATP-dependent protease subunit HslV (176 aa).

Thr2 is a catalytic residue. Residues Gly157, Cys160, and Thr163 each coordinate Na(+).

Belongs to the peptidase T1B family. HslV subfamily. In terms of assembly, a double ring-shaped homohexamer of HslV is capped on each side by a ring-shaped HslU homohexamer. The assembly of the HslU/HslV complex is dependent on binding of ATP.

It localises to the cytoplasm. The catalysed reaction is ATP-dependent cleavage of peptide bonds with broad specificity.. Allosterically activated by HslU binding. Protease subunit of a proteasome-like degradation complex believed to be a general protein degrading machinery. The chain is ATP-dependent protease subunit HslV from Salmonella agona (strain SL483).